Here is a 215-residue protein sequence, read N- to C-terminus: LysM and putative peptidoglycan-binding domain-containing protein 2 (215 aa).

The segment at 1 to 40 (MADSSPALSLREGGPRAPRPSAPSPPPRSRSGSESEEAEL) is disordered. An N-acetylalanine modification is found at alanine 2. A phosphoserine mark is found at serine 5, serine 24, serine 33, and serine 57. The segment covering 17-28 (APRPSAPSPPPR) has biased composition (pro residues). In terms of domain architecture, LysM spans 71-115 (VEHRVRAGDTLQGIALKYGVTMEQIKRANKLFTNDCIFLKKTLNI). Disordered stretches follow at residues 132 to 175 (DSPE…EEVS) and 193 to 215 (AAKKLKEESRDEESPYATSLYHS). The span at 196 to 205 (KLKEESRDEE) shows a compositional bias: basic and acidic residues.

The protein is LysM and putative peptidoglycan-binding domain-containing protein 2 (LYSMD2) of Homo sapiens (Human).